Consider the following 843-residue polypeptide: Protein PLASTID MOVEMENT IMPAIRED 1 (843 aa).

Positions 30 to 58 (PQVSVGNRRTNSLALPRSSVPSLVTSADE) are enriched in polar residues. Disordered stretches follow at residues 30 to 65 (PQVSVGNRRTNSLALPRSSVPSLVTSADEVSTARAE) and 88 to 116 (LEVEEEENVTQSNRIVKKPEESSSGSGVK). In terms of domain architecture, C2 NT-type spans 131–284 (LVRIGMQKLS…ELALKLGFQI (154 aa)). Disordered regions lie at residues 300–412 (FGMK…GTIG) and 450–472 (MMKDESDGGDGETESQRLDEEEQ). The span at 307–336 (KPKNFANSFGRKQSKTSFSVPSPKMTSRSE) shows a compositional bias: polar residues. Phosphoserine occurs at positions 314 and 328. The span at 365–381 (PEEKPVQKNDKPEQRAE) shows a compositional bias: basic and acidic residues. The residue at position 404 (T404) is a Phosphothreonine. Position 407 is a phosphoserine (S407). T410 carries the phosphothreonine modification. Acidic residues predominate over residues 456 to 472 (DGGDGETESQRLDEEEQ). S507 bears the Phosphoserine mark.

Expressed in leaves, stems, cauline leaves, and flowers but not in roots. Present in leaves in both mesophyll and pavement cells.

The protein localises to the cytoplasm. Necessary for chloroplast and nuclear photorelocation movements via the regulation of chloroplast-actin (cp-actin) filaments in mesophyll cells, and together with PMIR1, in pavement cells. Required component for both the low- and high-light-dependent chloroplast movement responses via an abscisic acid (ABA) pathway. Involved in the ABA response pathway during seed germination. Modulates ABA accumulation during periods of water deficit at the seedling stage. The sequence is that of Protein PLASTID MOVEMENT IMPAIRED 1 from Arabidopsis thaliana (Mouse-ear cress).